The sequence spans 220 residues: Pro-Pro endopeptidase (220 aa).

The signal sequence occupies residues 1 to 26 (MRPSKKLLIAIISIFLISSVPVSAHA). In terms of domain architecture, ATLF-like spans 35-220 (KDTLSQIVVF…TYSFLQNLAK (186 aa)). 2 interacts with substrate peptide regions span residues 101–103 (KGW) and 117–119 (GGS). His-142 contributes to the Zn(2+) binding site. Glu-143 functions as the Proton acceptor in the catalytic mechanism. Positions 146, 178, and 185 each coordinate Zn(2+).

It belongs to the peptidase M34 family. Pro-Pro endopeptidase subfamily. In terms of assembly, monomer. Zn(2+) serves as cofactor.

It is found in the secreted. The enzyme catalyses The enzyme catalyzes the hydrolytic cleavage of peptide bonds between two proline residues.. Is inhibited by the chelating agent o-phenanthroline in vitro. Its function is as follows. Zinc-dependent endoprotease with a unique preference for proline residues surrounding the scissile bond. Exhibits a high preference for an asparagine at the P2 position and hydrophobic residues (Val, Ile, Leu) at the P3 position. Efficiently cleaves the LPXTG cell surface proteins CD630_28310 and CD630_32460 at multiple cleavage sites in vivo. Has a role in the regulation of C.difficile adhesion versus motility by cleaving surface adhesion proteins such as the collagen binding protein CD630_28310, and is important for efficient infection. Is also able to cleave fibronectin and fibrinogen in vitro; cleaves at the N-terminus of the beta-chain of fibrinogen. Destabilizes the fibronectin network produced by human fibroblasts. Therefore, may be important in key steps of clostridial pathogenesis by degrading extracellular matrix components associated with the gut epithelial cells. To a lesser extent, IgA1, IgA2, and human HSP 90-beta, but not HSP 90-alpha, are also substrates for the enzyme. Is not active on different collagen types, casein and gelatin. The protein is Pro-Pro endopeptidase of Clostridioides difficile (strain 630) (Peptoclostridium difficile).